The chain runs to 129 residues: Small ribosomal subunit protein uS11 (129 aa).

This sequence belongs to the universal ribosomal protein uS11 family. As to quaternary structure, part of the 30S ribosomal subunit. Interacts with proteins S7 and S18. Binds to IF-3.

Functionally, located on the platform of the 30S subunit, it bridges several disparate RNA helices of the 16S rRNA. Forms part of the Shine-Dalgarno cleft in the 70S ribosome. The chain is Small ribosomal subunit protein uS11 from Phenylobacterium zucineum (strain HLK1).